Consider the following 614-residue polypeptide: UPF0329 protein ECU03_0090 (614 aa).

2 stretches are compositionally biased toward basic and acidic residues: residues 317-338 (EREE…EESL) and 345-354 (LRMEEKEKSK). The tract at residues 317 to 420 (EREEAEKMRG…KKSRSKGHRY (104 aa)) is disordered. Positions 355 to 364 (SRGKKKKGGK) are enriched in basic residues. Positions 372 to 381 (AKMEEEKKDS) are enriched in basic and acidic residues. The segment covering 382–394 (EEVEESAEAEVSL) has biased composition (acidic residues). Residues 408 to 420 (SSKKKSRSKGHRY) show a composition bias toward basic residues.

This sequence belongs to the UPF0329 family.

This is UPF0329 protein ECU03_0090 from Encephalitozoon cuniculi (strain GB-M1) (Microsporidian parasite).